The chain runs to 258 residues: Thiazole synthase (258 aa).

Lys100 (schiff-base intermediate with DXP) is an active-site residue. 1-deoxy-D-xylulose 5-phosphate is bound by residues Gly161, 187–188 (AG), and 209–210 (NS).

The protein belongs to the ThiG family. In terms of assembly, homotetramer. Forms heterodimers with either ThiH or ThiS.

The protein localises to the plastid. Its subcellular location is the chloroplast. It carries out the reaction [ThiS sulfur-carrier protein]-C-terminal-Gly-aminoethanethioate + 2-iminoacetate + 1-deoxy-D-xylulose 5-phosphate = [ThiS sulfur-carrier protein]-C-terminal Gly-Gly + 2-[(2R,5Z)-2-carboxy-4-methylthiazol-5(2H)-ylidene]ethyl phosphate + 2 H2O + H(+). It participates in cofactor biosynthesis; thiamine diphosphate biosynthesis. Its function is as follows. Catalyzes the rearrangement of 1-deoxy-D-xylulose 5-phosphate (DXP) to produce the thiazole phosphate moiety of thiamine. Sulfur is provided by the thiocarboxylate moiety of the carrier protein ThiS. In vitro, sulfur can be provided by H(2)S. The chain is Thiazole synthase from Cyanidioschyzon merolae (strain NIES-3377 / 10D) (Unicellular red alga).